We begin with the raw amino-acid sequence, 103 residues long: Small ribosomal subunit protein uS10 (103 aa).

Belongs to the universal ribosomal protein uS10 family. In terms of assembly, part of the 30S ribosomal subunit.

Its function is as follows. Involved in the binding of tRNA to the ribosomes. The polypeptide is Small ribosomal subunit protein uS10 (Baumannia cicadellinicola subsp. Homalodisca coagulata).